Here is a 170-residue protein sequence, read N- to C-terminus: Peptide deformylase (170 aa).

The Fe cation site is built by Cys-94 and His-136. Glu-137 is an active-site residue. His-140 provides a ligand contact to Fe cation.

The protein belongs to the polypeptide deformylase family. Fe(2+) serves as cofactor.

It catalyses the reaction N-terminal N-formyl-L-methionyl-[peptide] + H2O = N-terminal L-methionyl-[peptide] + formate. Its function is as follows. Removes the formyl group from the N-terminal Met of newly synthesized proteins. Requires at least a dipeptide for an efficient rate of reaction. N-terminal L-methionine is a prerequisite for activity but the enzyme has broad specificity at other positions. In Wolinella succinogenes (strain ATCC 29543 / DSM 1740 / CCUG 13145 / JCM 31913 / LMG 7466 / NCTC 11488 / FDC 602W) (Vibrio succinogenes), this protein is Peptide deformylase.